A 140-amino-acid polypeptide reads, in one-letter code: Large ribosomal subunit protein uL11 (140 aa).

The protein belongs to the universal ribosomal protein uL11 family. Part of the ribosomal stalk of the 50S ribosomal subunit. Interacts with L10 and the large rRNA to form the base of the stalk. L10 forms an elongated spine to which L12 dimers bind in a sequential fashion forming a multimeric L10(L12)X complex. Post-translationally, one or more lysine residues are methylated.

Functionally, forms part of the ribosomal stalk which helps the ribosome interact with GTP-bound translation factors. This is Large ribosomal subunit protein uL11 from Campylobacter hominis (strain ATCC BAA-381 / DSM 21671 / CCUG 45161 / LMG 19568 / NCTC 13146 / CH001A).